Here is a 118-residue protein sequence, read N- to C-terminus: Small ribosomal subunit protein uS13 (118 aa).

The disordered stretch occupies residues 94–118; the sequence is GLPLRGQRTKTNARTRKGRRKGTSS.

The protein belongs to the universal ribosomal protein uS13 family. In terms of assembly, part of the 30S ribosomal subunit. Forms a loose heterodimer with protein S19. Forms two bridges to the 50S subunit in the 70S ribosome.

Its function is as follows. Located at the top of the head of the 30S subunit, it contacts several helices of the 16S rRNA. In the 70S ribosome it contacts the 23S rRNA (bridge B1a) and protein L5 of the 50S subunit (bridge B1b), connecting the 2 subunits; these bridges are implicated in subunit movement. Contacts the tRNAs in the A and P-sites. The chain is Small ribosomal subunit protein uS13 from Legionella pneumophila (strain Paris).